Here is a 173-residue protein sequence, read N- to C-terminus: Co-chaperone protein HscB homolog (173 aa).

The region spanning 5–77 (CHFAQFDLQP…PRRALYLLTL (73 aa)) is the J domain.

The protein belongs to the HscB family. Interacts with HscA and stimulates its ATPase activity.

Functionally, co-chaperone involved in the maturation of iron-sulfur cluster-containing proteins. Seems to help targeting proteins to be folded toward HscA. This Pseudomonas paraeruginosa (strain DSM 24068 / PA7) (Pseudomonas aeruginosa (strain PA7)) protein is Co-chaperone protein HscB homolog.